Reading from the N-terminus, the 570-residue chain is Proline--tRNA ligase (570 aa).

The protein belongs to the class-II aminoacyl-tRNA synthetase family. ProS type 1 subfamily. In terms of assembly, homodimer.

Its subcellular location is the cytoplasm. The enzyme catalyses tRNA(Pro) + L-proline + ATP = L-prolyl-tRNA(Pro) + AMP + diphosphate. In terms of biological role, catalyzes the attachment of proline to tRNA(Pro) in a two-step reaction: proline is first activated by ATP to form Pro-AMP and then transferred to the acceptor end of tRNA(Pro). As ProRS can inadvertently accommodate and process non-cognate amino acids such as alanine and cysteine, to avoid such errors it has two additional distinct editing activities against alanine. One activity is designated as 'pretransfer' editing and involves the tRNA(Pro)-independent hydrolysis of activated Ala-AMP. The other activity is designated 'posttransfer' editing and involves deacylation of mischarged Ala-tRNA(Pro). The misacylated Cys-tRNA(Pro) is not edited by ProRS. The chain is Proline--tRNA ligase from Acidithiobacillus ferrooxidans (strain ATCC 23270 / DSM 14882 / CIP 104768 / NCIMB 8455) (Ferrobacillus ferrooxidans (strain ATCC 23270)).